A 431-amino-acid chain; its full sequence is Histidine--tRNA ligase (431 aa).

The protein belongs to the class-II aminoacyl-tRNA synthetase family. Homodimer.

Its subcellular location is the cytoplasm. The catalysed reaction is tRNA(His) + L-histidine + ATP = L-histidyl-tRNA(His) + AMP + diphosphate + H(+). The protein is Histidine--tRNA ligase of Ligilactobacillus salivarius (strain UCC118) (Lactobacillus salivarius).